We begin with the raw amino-acid sequence, 474 residues long: MPGKTLYDKIWDAHVVAEQDGEAILYIDLHLIHEVTTPQAFAGLRVAGRPVRRPDRTLAVADHNVPTEGQGLGIDAVADEEARLQLQTLAKNVAEHGIEFFSMGDVRNGIVHVVGPEQGRTQPGMTIVCGDSHTSTHGAFGALAHGIGTSEVEHVLATQTLRQKKAKNMRVRIEGEPAPGVGAKDFALAVIGEIGTAGGTGYVIEYAGSAVRALSMEGRMTLCNLTIEGGAKAGLIAPDEMTYAYLQGRPAAPKGGAWEMALDYWKGFHSDEDAVFDREIVLDAAKIAPTVTWGTSPEDVVAVTGLVPSPDSFGTPDKRASAARALEYMGLTAGQPITEAKVDVVFIGSCTNSRIEDLRAAAAIVAKALEGGRKVAPGVRAMVVPGSGLVREQAEAEGLDEVFKAAGFDWREPGCSMCLGMNPDRLAPGERCASTSNRNFEGRQGRGGRTHLMSPAMAAAAAIAGHIADVREFL.

Cys-350, Cys-415, and Cys-418 together coordinate [4Fe-4S] cluster.

The protein belongs to the aconitase/IPM isomerase family. LeuC type 1 subfamily. Heterodimer of LeuC and LeuD. [4Fe-4S] cluster is required as a cofactor.

It catalyses the reaction (2R,3S)-3-isopropylmalate = (2S)-2-isopropylmalate. Its pathway is amino-acid biosynthesis; L-leucine biosynthesis; L-leucine from 3-methyl-2-oxobutanoate: step 2/4. Catalyzes the isomerization between 2-isopropylmalate and 3-isopropylmalate, via the formation of 2-isopropylmaleate. In Phenylobacterium zucineum (strain HLK1), this protein is 3-isopropylmalate dehydratase large subunit.